Reading from the N-terminus, the 134-residue chain is MENKKTIYFLCTGNSCRSQMAEAWGKQYLGDKWNVYSAGIEAHGVNPNAIKAMNEVNIDITNQTSDIIDANILNRADLVVTLCSHADSVCPSTPPHINRVHWGFDDPAGKEWSEFQRVRDEIGERIKRFSETGE.

Residues cysteine 11, cysteine 83, and cysteine 90 each act as nucleophile in the active site. Disulfide bonds link cysteine 11–cysteine 83 and cysteine 83–cysteine 90.

It belongs to the low molecular weight phosphotyrosine protein phosphatase family. Thioredoxin-coupled ArsC subfamily.

The protein localises to the cytoplasm. The catalysed reaction is arsenate + [thioredoxin]-dithiol + H(+) = arsenite + [thioredoxin]-disulfide + H2O. Its function is as follows. Catalyzes the reduction of arsenate [As(V)] to arsenite [As(III)]. The chain is Arsenate reductase 2 from Bacillus cereus (strain ATCC 10987 / NRS 248).